We begin with the raw amino-acid sequence, 528 residues long: Chromosomal replication initiator protein DnaA (528 aa).

Positions 1–104 are domain I, interacts with DnaA modulators; it reads MNDDPNALAR…PVDDEPESEA (104 aa). The interval 93-159 is disordered; it reads AAPVDDEPES…DFEEVDDDSE (67 aa). Residues 104-123 show a composition bias toward basic and acidic residues; that stretch reads APSRERRPDPEPVHTPRHLE. The segment at 105–187 is domain II; that stretch reads PSRERRPDPE…GPAPAATGGN (83 aa). A compositionally biased stretch (acidic residues) spans 149 to 159; the sequence is TDFEEVDDDSE. A domain III, AAA+ region region spans residues 188–404; the sequence is SLNAKYTFDT…GALIRVTAFA (217 aa). The ATP site is built by glycine 232, glycine 234, lysine 235, and threonine 236. Residues 405 to 528 form a domain IV, binds dsDNA region; that stretch reads SLNRQPLDLT…TARIKQRSKR (124 aa).

The protein belongs to the DnaA family. As to quaternary structure, oligomerizes as a right-handed, spiral filament on DNA at oriC.

It localises to the cytoplasm. In terms of biological role, plays an essential role in the initiation and regulation of chromosomal replication. ATP-DnaA binds to the origin of replication (oriC) to initiate formation of the DNA replication initiation complex once per cell cycle. Binds the DnaA box (a 9 base pair repeat at the origin) and separates the double-stranded (ds)DNA. Forms a right-handed helical filament on oriC DNA; dsDNA binds to the exterior of the filament while single-stranded (ss)DNA is stabiized in the filament's interior. The ATP-DnaA-oriC complex binds and stabilizes one strand of the AT-rich DNA unwinding element (DUE), permitting loading of DNA polymerase. After initiation quickly degrades to an ADP-DnaA complex that is not apt for DNA replication. Binds acidic phospholipids. The sequence is that of Chromosomal replication initiator protein DnaA from Rhodococcus opacus (strain B4).